The chain runs to 264 residues: Outer kinetochore KNL1 complex subunit sos7 (264 aa).

A coiled-coil region spans residues 90 to 236 (EAEDNEKLET…SNQIKAAIHT (147 aa)).

Belongs to the KRE28 family. As to quaternary structure, component of the KNL1/SPC105 complex composed of at least spc7 and sos7. Part of the outer kinetochore KMN network that includes the KNL1, MIS12 and NDC80 complexes. Interacts (via C-terminus) with spc7 (via C-terminus); the interaction is direct.

The protein localises to the nucleus. Its subcellular location is the chromosome. It is found in the centromere. The protein resides in the kinetochore. In terms of biological role, acts as a component of the outer kinetochore KNL1 complex that facilitates microtubule-kinetochore interactions and the spindle assembly checkpoint. Kinetochores, consisting of a centromere-associated inner segment and a microtubule-contacting outer segment, play a crucial role in chromosome segregation by mediating the physical connection between centromeric DNA and spindle microtubules. The outer kinetochore is made up of the ten-subunit KMN network, comprising the MIS12, NDC80 and KNL1 complexes, and auxiliary microtubule-associated components; together they connect the outer kinetochore with the inner kinetochore, bind microtubules, and mediate interactions with mitotic checkpoint proteins that delay anaphase until chromosomes are bioriented on the spindle. This is Outer kinetochore KNL1 complex subunit sos7 (sos7) from Schizosaccharomyces pombe (strain 972 / ATCC 24843) (Fission yeast).